We begin with the raw amino-acid sequence, 318 residues long: Annexin D6 (318 aa).

Alanine 2 bears the N-acetylalanine mark. Annexin repeat units lie at residues 11–82, 83–154, 168–239, and 243–314; these read PLPE…LWTL, DPTE…PLVS, KLAR…TAIK, and YPEK…ALLG. 4 residues coordinate Ca(2+): phenylalanine 24, glycine 26, glycine 28, and glutamate 68. A Phosphoserine modification is found at serine 95. Phosphothreonine is present on residues threonine 100 and threonine 112. Tyrosine 129 carries the post-translational modification Phosphotyrosine. Ca(2+) is bound by residues isoleucine 256, arginine 258, and glycine 260. Phosphotyrosine is present on tyrosine 285. Position 290 is a phosphoserine (serine 290). 2 residues coordinate Ca(2+): aspartate 300 and threonine 301.

The protein belongs to the annexin (TC 1.A.31.1) family. Expressed in flowers.

In Arabidopsis thaliana (Mouse-ear cress), this protein is Annexin D6 (ANN6).